The sequence spans 711 residues: RB-associated KRAB zinc finger protein (711 aa).

Residues 8 to 79 (LSFKDVAVAF…EGDRHAQRHL (72 aa)) enclose the KRAB domain. Glycyl lysine isopeptide (Lys-Gly) (interchain with G-Cter in SUMO2) cross-links involve residues Lys97 and Lys256. The interval 170–257 (AYGESLEDFN…YPRSQMELKP (88 aa)) is required for interaction with RB1. 2 consecutive C2H2-type zinc fingers follow at residues 258–280 (FECT…QRAH) and 286–308 (YACS…RRSH). Lys312 participates in a covalent cross-link: Glycyl lysine isopeptide (Lys-Gly) (interchain with G-Cter in SUMO2). 6 consecutive C2H2-type zinc fingers follow at residues 314–336 (YKCN…QRTH), 342–364 (YECS…QRNH), 370–392 (YPCN…QRTH), 398–420 (YKCN…QRTH), 426–448 (YQCS…YRSH), and 454–476 (YECT…WKVH). A Glycyl lysine isopeptide (Lys-Gly) (interchain with G-Cter in SUMO2) cross-link involves residue Lys354. An interaction with AR region spans residues 414 to 711 (ITHQRTHTGE…TVNVLTVEKL (298 aa)). The segment at 508-530 (YECNECGKTFLDSSAFHRHQSVP) adopts a C2H2-type 9; degenerate zinc-finger fold. Residue Lys534 forms a Glycyl lysine isopeptide (Lys-Gly) (interchain with G-Cter in SUMO2) linkage. 6 C2H2-type zinc fingers span residues 536–558 (YECN…YRGH), 564–586 (FGCS…QRVH), 592–614 (YECY…HRIH), 620–642 (YECS…YRSH), 648–670 (YECN…YRTH), and 676–698 (YECN…QRIH).

It belongs to the krueppel C2H2-type zinc-finger protein family. As to quaternary structure, interacts with AR. May also interact with other nuclear hormone receptors such as NR3C1/GR. Interacts with RB1.

Its subcellular location is the nucleus. May repress E2F-dependent transcription. May promote AR-dependent transcription. In Mus musculus (Mouse), this protein is RB-associated KRAB zinc finger protein (Rbak).